Reading from the N-terminus, the 141-residue chain is ATP synthase epsilon chain (141 aa).

This sequence belongs to the ATPase epsilon chain family. In terms of assembly, F-type ATPases have 2 components, CF(1) - the catalytic core - and CF(0) - the membrane proton channel. CF(1) has five subunits: alpha(3), beta(3), gamma(1), delta(1), epsilon(1). CF(0) has three main subunits: a, b and c.

The protein localises to the cell inner membrane. Produces ATP from ADP in the presence of a proton gradient across the membrane. This is ATP synthase epsilon chain from Burkholderia cenocepacia (strain ATCC BAA-245 / DSM 16553 / LMG 16656 / NCTC 13227 / J2315 / CF5610) (Burkholderia cepacia (strain J2315)).